The primary structure comprises 162 residues: Nucleotide-binding protein SGR_2909 (162 aa).

It belongs to the YajQ family.

In terms of biological role, nucleotide-binding protein. The protein is Nucleotide-binding protein SGR_2909 of Streptomyces griseus subsp. griseus (strain JCM 4626 / CBS 651.72 / NBRC 13350 / KCC S-0626 / ISP 5235).